A 320-amino-acid polypeptide reads, in one-letter code: o-succinylbenzoate synthase (320 aa).

The active-site Proton donor is the lysine 133. Mg(2+)-binding residues include aspartate 161, glutamate 190, and aspartate 213. Residue lysine 235 is the Proton acceptor of the active site.

The protein belongs to the mandelate racemase/muconate lactonizing enzyme family. MenC type 1 subfamily. A divalent metal cation is required as a cofactor.

It carries out the reaction (1R,6R)-6-hydroxy-2-succinyl-cyclohexa-2,4-diene-1-carboxylate = 2-succinylbenzoate + H2O. The protein operates within quinol/quinone metabolism; 1,4-dihydroxy-2-naphthoate biosynthesis; 1,4-dihydroxy-2-naphthoate from chorismate: step 4/7. It functions in the pathway quinol/quinone metabolism; menaquinone biosynthesis. Its function is as follows. Converts 2-succinyl-6-hydroxy-2,4-cyclohexadiene-1-carboxylate (SHCHC) to 2-succinylbenzoate (OSB). This Citrobacter koseri (strain ATCC BAA-895 / CDC 4225-83 / SGSC4696) protein is o-succinylbenzoate synthase.